A 673-amino-acid polypeptide reads, in one-letter code: UvrABC system protein B (673 aa).

Residues 26 to 414 (EGLEDGLAHQ…GDEVVDQVVR (389 aa)) form the Helicase ATP-binding domain. 39–46 (GVTGSGKT) contributes to the ATP binding site. The short motif at 92 to 115 (YYDYYQPEAYVPSSDTFIEKDASV) is the Beta-hairpin element. Residues 431-597 (QVDDLLSEIR…GLNKKVVDIL (167 aa)) form the Helicase C-terminal domain. One can recognise a UVR domain in the interval 633–668 (QQKIHELEEQMMQHAQNLEFEEAAQIRDQLHQLREL).

This sequence belongs to the UvrB family. Forms a heterotetramer with UvrA during the search for lesions. Interacts with UvrC in an incision complex.

The protein resides in the cytoplasm. In terms of biological role, the UvrABC repair system catalyzes the recognition and processing of DNA lesions. A damage recognition complex composed of 2 UvrA and 2 UvrB subunits scans DNA for abnormalities. Upon binding of the UvrA(2)B(2) complex to a putative damaged site, the DNA wraps around one UvrB monomer. DNA wrap is dependent on ATP binding by UvrB and probably causes local melting of the DNA helix, facilitating insertion of UvrB beta-hairpin between the DNA strands. Then UvrB probes one DNA strand for the presence of a lesion. If a lesion is found the UvrA subunits dissociate and the UvrB-DNA preincision complex is formed. This complex is subsequently bound by UvrC and the second UvrB is released. If no lesion is found, the DNA wraps around the other UvrB subunit that will check the other stand for damage. In Salmonella typhi, this protein is UvrABC system protein B.